Consider the following 640-residue polypeptide: Threonine--tRNA ligase (640 aa).

Residues 1–61 (MPTITLPDGS…DSDATLQIIT (61 aa)) form the TGS domain. A catalytic region spans residues 242–533 (DHRKIGKRLG…LIEHYEGAFP (292 aa)). Cys333, His384, and His510 together coordinate Zn(2+).

It belongs to the class-II aminoacyl-tRNA synthetase family. In terms of assembly, homodimer. The cofactor is Zn(2+).

It localises to the cytoplasm. It catalyses the reaction tRNA(Thr) + L-threonine + ATP = L-threonyl-tRNA(Thr) + AMP + diphosphate + H(+). Its function is as follows. Catalyzes the attachment of threonine to tRNA(Thr) in a two-step reaction: L-threonine is first activated by ATP to form Thr-AMP and then transferred to the acceptor end of tRNA(Thr). Also edits incorrectly charged L-seryl-tRNA(Thr). This Pseudomonas fluorescens (strain Pf0-1) protein is Threonine--tRNA ligase.